A 377-amino-acid polypeptide reads, in one-letter code: Chaperone protein DnaJ (377 aa).

In terms of domain architecture, J spans 5 to 70; sequence DCYEVLGISR…QKKAAYDQYG (66 aa). The CR-type zinc-finger motif lies at 133–211; that stretch reads GISKEIQIPT…CHGHGRYERS (79 aa). Zn(2+) is bound by residues Cys146, Cys149, Cys163, Cys166, Cys185, Cys188, Cys199, and Cys202. CXXCXGXG motif repeat units follow at residues 146-153, 163-170, 185-192, and 199-206; these read CEQCNGSG, CGTCYGQG, CPTCRGQG, and CHKCHGHG.

The protein belongs to the DnaJ family. As to quaternary structure, homodimer. Zn(2+) serves as cofactor.

Its subcellular location is the cytoplasm. In terms of biological role, participates actively in the response to hyperosmotic and heat shock by preventing the aggregation of stress-denatured proteins and by disaggregating proteins, also in an autonomous, DnaK-independent fashion. Unfolded proteins bind initially to DnaJ; upon interaction with the DnaJ-bound protein, DnaK hydrolyzes its bound ATP, resulting in the formation of a stable complex. GrpE releases ADP from DnaK; ATP binding to DnaK triggers the release of the substrate protein, thus completing the reaction cycle. Several rounds of ATP-dependent interactions between DnaJ, DnaK and GrpE are required for fully efficient folding. Also involved, together with DnaK and GrpE, in the DNA replication of plasmids through activation of initiation proteins. This chain is Chaperone protein DnaJ, found in Psychromonas ingrahamii (strain DSM 17664 / CCUG 51855 / 37).